The primary structure comprises 331 residues: Ribosomal RNA small subunit methyltransferase H (331 aa).

Residues 48-50, aspartate 67, aspartate 115, and glutamine 122 each bind S-adenosyl-L-methionine; that span reads GGH. Positions 297 to 331 are disordered; sequence RGTEKPTEEEISENRRASSAKVRAVEKIRTSRTTA. The span at 298 to 312 shows a compositional bias: basic and acidic residues; it reads GTEKPTEEEISENRR.

Belongs to the methyltransferase superfamily. RsmH family.

It localises to the cytoplasm. The enzyme catalyses cytidine(1402) in 16S rRNA + S-adenosyl-L-methionine = N(4)-methylcytidine(1402) in 16S rRNA + S-adenosyl-L-homocysteine + H(+). Its function is as follows. Specifically methylates the N4 position of cytidine in position 1402 (C1402) of 16S rRNA. The sequence is that of Ribosomal RNA small subunit methyltransferase H from Micrococcus luteus (strain ATCC 4698 / DSM 20030 / JCM 1464 / CCM 169 / CCUG 5858 / IAM 1056 / NBRC 3333 / NCIMB 9278 / NCTC 2665 / VKM Ac-2230) (Micrococcus lysodeikticus).